The following is a 587-amino-acid chain: UDP-N-acetylmuramoylalanine--D-glutamate ligase (587 aa).

Positions Asp124–Asp147 are disordered. Positions Pro132–Asp147 are enriched in low complexity. Gly214–Thr220 provides a ligand contact to ATP.

This sequence belongs to the MurCDEF family.

Its subcellular location is the cytoplasm. The enzyme catalyses UDP-N-acetyl-alpha-D-muramoyl-L-alanine + D-glutamate + ATP = UDP-N-acetyl-alpha-D-muramoyl-L-alanyl-D-glutamate + ADP + phosphate + H(+). The protein operates within cell wall biogenesis; peptidoglycan biosynthesis. In terms of biological role, cell wall formation. Catalyzes the addition of glutamate to the nucleotide precursor UDP-N-acetylmuramoyl-L-alanine (UMA). The protein is UDP-N-acetylmuramoylalanine--D-glutamate ligase of Polaromonas sp. (strain JS666 / ATCC BAA-500).